A 71-amino-acid chain; its full sequence is DNA-directed RNA polymerase subunit omega (71 aa).

This sequence belongs to the RNA polymerase subunit omega family. In terms of assembly, the RNAP catalytic core consists of 2 alpha, 1 beta, 1 beta' and 1 omega subunit. When a sigma factor is associated with the core the holoenzyme is formed, which can initiate transcription.

The enzyme catalyses RNA(n) + a ribonucleoside 5'-triphosphate = RNA(n+1) + diphosphate. Its function is as follows. Promotes RNA polymerase assembly. Latches the N- and C-terminal regions of the beta' subunit thereby facilitating its interaction with the beta and alpha subunits. The protein is DNA-directed RNA polymerase subunit omega of Syntrophomonas wolfei subsp. wolfei (strain DSM 2245B / Goettingen).